We begin with the raw amino-acid sequence, 154 residues long: CASP-like protein 5B3 (154 aa).

Residues 1-17 (MKDVVGSPGTWSGMSLR) are Cytoplasmic-facing. Residues 18-38 (VSQCVFAGASVVAMASAYGFS) traverse the membrane as a helical segment. A glycan (N-linked (GlcNAc...) asparagine) is linked at Asn39. Topologically, residues 39–42 (NYTA) are extracellular. A helical transmembrane segment spans residues 43-63 (FCYLIASMGLQLLWSFGLACL). The Cytoplasmic segment spans residues 64–77 (DIYSLQTKRDLHNP). A helical transmembrane segment spans residues 78-98 (VLVSLFVVGDWVTAILSFAAA). Topologically, residues 99 to 129 (SASAGVTILFERDVHFCRMYPQLSCGRYELS) are extracellular. Residues 130-150 (VILAFITWSFIATSAVSMFWL) form a helical membrane-spanning segment. Topologically, residues 151 to 154 (LASL) are cytoplasmic.

Belongs to the Casparian strip membrane proteins (CASP) family. As to quaternary structure, homodimer and heterodimers.

The protein resides in the cell membrane. In Oryza sativa subsp. indica (Rice), this protein is CASP-like protein 5B3.